A 311-amino-acid chain; its full sequence is Mitochondrial FAD carrier protein FLX1 (311 aa).

3 Solcar repeats span residues 7–101 (TPLQ…TKEL), 123–210 (MNSL…LKQR), and 224–310 (LTNL…LKHR). 6 helical membrane passes run 13–33 (VISGLSAGSVTTLVVHPLDLL), 77–97 (LSINLFGNAIAWGVYFGLYGV), 129–149 (LSAGASSGLMTAILTNPIWVI), 183–203 (LWKGLVPALFGVSQGALYFAV), 230–250 (IEITSLGKMVSVTLVYPFQLL), and 266–286 (LFPLIKLIIANDGFVGLYKGL).

The protein belongs to the mitochondrial carrier (TC 2.A.29) family.

It is found in the mitochondrion inner membrane. Its function is as follows. Transport of FAD from the cytosol to the mitochondrial matrix. The sequence is that of Mitochondrial FAD carrier protein FLX1 (FLX1) from Saccharomyces cerevisiae (strain ATCC 204508 / S288c) (Baker's yeast).